Here is a 452-residue protein sequence, read N- to C-terminus: Minor capsid protein (452 aa).

Basic and acidic residues-rich tracts occupy residues 219–236 (VDKPEDKPKPVFDDKGKQ) and 247–258 (GKPDISKPGEKQ). A disordered region spans residues 219–258 (VDKPEDKPKPVFDDKGKQPTDTVPPVDNGKPDISKPGEKQ).

Belongs to the closteroviridae minor capsid protein family.

It localises to the virion. In terms of biological role, minor capsid protein that encapsidates the 5'-terminal portion of the viral genome. This is Minor capsid protein from Lettuce infectious yellows virus (isolate United States/92) (LIYV).